Reading from the N-terminus, the 685-residue chain is Diphthine--ammonia ligase (685 aa).

This sequence in the C-terminal section; belongs to the RutC family. In the N-terminal section; belongs to the Diphthine--ammonia ligase family. As to quaternary structure, interacts with elongation factor 2 (eEF-2; EFT1 or EFT2).

Its subcellular location is the cytoplasm. The catalysed reaction is diphthine-[translation elongation factor 2] + NH4(+) + ATP = diphthamide-[translation elongation factor 2] + AMP + diphosphate + H(+). It participates in protein modification; peptidyl-diphthamide biosynthesis. Functionally, amidase that catalyzes the last step of diphthamide biosynthesis using ammonium and ATP. Diphthamide biosynthesis consists in the conversion of an L-histidine residue in the translation elongation factor eEF-2 (EFT1 or EFT2) to diphthamide. The sequence is that of Diphthine--ammonia ligase (DPH6) from Saccharomyces cerevisiae (strain ATCC 204508 / S288c) (Baker's yeast).